Reading from the N-terminus, the 274-residue chain is Tropomyosin (274 aa).

The disordered stretch occupies residues 1 to 30 (MKLEKDNAMDRADTLEQQNKEANIRAEKAE). A coiled-coil region spans residues 1–274 (MKLEKDNAMD…DQTFSELSGY (274 aa)).

The protein belongs to the tropomyosin family. Homodimer.

Functionally, tropomyosin, in association with the troponin complex, plays a central role in the calcium dependent regulation of muscle contraction. This is Tropomyosin from Panulirus stimpsoni (Chinese spiny lobster).